The following is a 606-amino-acid chain: MSLCRLLLMLAMCCGVSRGSQTLPAGGRRGQRRRDNSAQWSTQQRPEGAVGPAPLTDVVTAAGTRTVPDVDQAGAVLVRQYNLVTSPLGLATLGSTNALLYAAPVSPLMPLQDGTTSNIMSTESSNYAQYRVQGLTVRWRPVVPNAVGGFSISMAYWPQTTSTPTSIDMNSITSTDVRVVLQPGSAGLLTIPHERLAYKNNGWRSVETVSVPQEDATSGMLMVCVHGTPWNSYTNSVYTGPLGMVDFAIKLQLRNLSPGNTNARVTRVKVTAPHTIKADPSGATITTAAAARFMADVRWGLGTAEDGEIGHGILGVLFNLADTVLGGLPSTLLRAASGQYMYGRPVGNANGEPEVKLYMSVEDAVNDKPIMVPHDIDLGTSTVTCQDYGNQHVDDRPSPAPAPKRALGTLRSGDVLRITGSMQYVTNAELLPQSVSQGYFGAGSTMMVHNLITGVRAPASSVDWTKATVDGVQVKTVDASSGSNRFAALPAFGKPAVWGPQGAGYFYQYNSTHQEWIYFLQNGSSVVWYAYTNMLGQKSDTSILFEVRPIQASDQPWFLAHHTGGDDCTTCLPLGLRTCCRQAPEDQSPETRRLLDRLSRTFPSPP.

Residues 1-19 (MSLCRLLLMLAMCCGVSRG) form the signal peptide. Residues 22 to 54 (TLPAGGRRGQRRRDNSAQWSTQQRPEGAVGPAP) form a disordered region. The Nuclear localization signal motif lies at 28–34 (RRGQRRR). The N-linked (GlcNAc...) asparagine; by host glycan is linked to Asn255. Residues 313–339 (ILGVLFNLADTVLGGLPSTLLRAASGQ) form a particle formation region. Asn510 carries N-linked (GlcNAc...) asparagine; by host glycosylation.

It belongs to the hepevirus capsid protein family. In terms of assembly, homodimer. Self-assembles to form the capsid. The capsid is dominated by dimers that define the 30 morphological units. Interacts with phosphorylated protein ORF3. In terms of processing, N-glycosylated.

It localises to the secreted. Its subcellular location is the virion. The protein resides in the host cytoplasm. It is found in the host endoplasmic reticulum. The protein localises to the host Golgi apparatus. It localises to the host cell surface. Its subcellular location is the host nucleus. Plays a role in the inhibition of host antibody-mediated neutralization without blocking viral cell entry. Its function is as follows. Forms an icosahedral capsid with a T=1 symmetry and a 34 nm diameter. The capsid is composed of 60 copies linked to each other. Binds to the 5' end of the genomic RNA to mediate genome encapsidation. This chain is Pro-secreted protein ORF2, found in Gallus gallus (Chicken).